Here is a 286-residue protein sequence, read N- to C-terminus: Nucleotide-binding protein Sfum_2066 (286 aa).

8–15 (GLSGSGKS) contacts ATP. Residue 59-62 (DIRE) coordinates GTP.

This sequence belongs to the RapZ-like family.

Its function is as follows. Displays ATPase and GTPase activities. The protein is Nucleotide-binding protein Sfum_2066 of Syntrophobacter fumaroxidans (strain DSM 10017 / MPOB).